The following is a 101-amino-acid chain: Large ribosomal subunit protein bL27 (101 aa).

Positions 1–9 are excised as a propeptide; that stretch reads MLLMNLQLF.

Belongs to the bacterial ribosomal protein bL27 family. Post-translationally, the N-terminus is cleaved by ribosomal processing cysteine protease Prp.

The chain is Large ribosomal subunit protein bL27 from Clostridium tetani (strain Massachusetts / E88).